A 141-amino-acid chain; its full sequence is MAKKIVGQIKLQINAGKATPAPPVGPALGQHGVNIMGFCKEFNAKTADQAGLIIPVVISVYQDRSYSFITKTPPAAVLIKKAIGIQSGSGEPNKKKVAKISKDKIREIAELKMPDLNAASLEAAMSMISGTARSMGVVVED.

It belongs to the universal ribosomal protein uL11 family. Part of the ribosomal stalk of the 50S ribosomal subunit. Interacts with L10 and the large rRNA to form the base of the stalk. L10 forms an elongated spine to which L12 dimers bind in a sequential fashion forming a multimeric L10(L12)X complex. In terms of processing, one or more lysine residues are methylated.

Its function is as follows. Forms part of the ribosomal stalk which helps the ribosome interact with GTP-bound translation factors. The sequence is that of Large ribosomal subunit protein uL11 from Alkaliphilus oremlandii (strain OhILAs) (Clostridium oremlandii (strain OhILAs)).